The following is a 2489-amino-acid chain: MSMLPWSQIRDVSKLLLGFMLFIISIQKIASILMSWILMLRHSTIRKISFGYFFGTSIRRAFILTDFAQIYIGKITLRIGWKPGIVFHNVDLKLFGKDSHITAHSTKDSRTYFNPRDQTFTFVINRRVLSILKLVFSFSTFFHTLALTVPNGKQYKLNIGSITISHPHDDTIKLEAFLHDFTHPETKDTLNHTGFFMVCKIGKEDDTGSNCTKVILKNWKSSLKISDVCWHLPEKKGKNLHSEPVEPFSAGDDAEMLTSYRKMLKPFHYPLKTLNILDLKVENVKLIYKKKFTIRISSAQLYLESISILNNVSALELLPLNKPTWGDFELSLSANAVVVDIDGNTAVRIPFGNVILTSDILLFLLDNVPLRRTKVSSILNIINPSVFLTIHQVLEVLHLVDKFDSPETSSCTNTNDRSLNILDLDIDRLPSFNFELLMSNFISRLHISDEENVTFKVFSTHALFSRNNLSMTPKKGQVMQIRPDWPFAKTALVSDQLSNYIKIVGTSLSYLRIPTEQDANPVSIPVCGFERLDTFLDEFSNSKLIVQSTLRHSYVSLENIEVLHTLSRAFDKIYLLISSRTKRNAAHKANGGKLGDLNEAKKTFNWSLKLRMKDISCSLLVAGFLPKNLDPVEAENFNLSDVTRGAKVVFTESILLADSQEKNFTIIDASVYRFMDGTTYKPSPEVIIQFTNLLLSFNDSDEIHFSLPKIKFKMDVNIIWLWFYIRSIWIKFRPNSKLSRNSVSSVKSVNVLDRLRVDIGKMIIELTLPHNTEVLLIFERIGLSSSTKNLTIASLSAYVVSVYVKHIKVYVSLLNINDFELDTEELICKKSAVINTSLIHFHAEYHFRFYMITDNIVTLYKSFKQIKLAFSNLNEFKRLYPQQQFPKKVPNLHICCQDFLIDIEEDPFEQELGLILKVGVLEQRERLKKLEEFKEKLSTYEDMNVRLRSLYDTSRGQSFFPEFYANDQEYEQKAYLRLLENFSTSWIARYRKAKLSFYGMPYRVISREELGTKYHLFTRQKTSTVANLVVKDLDFKLGSPSFPLDNYMDFVYQYGKKVPKSTEYTLLIILGLKIKSALWELRLRDYPIPAISFPDTFTTGDVVFAEKMPAPCALHTVYVPFVSSAQRSPYNDANTIYGLHIIRTINSVKTYFNIRSMVTSSSSARITWGKSLQPGYESLMLWFDFLTKPLIDPSKKLGFWDKFRYLVHGKWIYEFSEESEIHLNIKGSHDPYKITDDGAGLAFCWSGGTTIYVHNSTDPKEFLKIESQRFQLAVPDFAKVSKFDKVFMKLDGRVIWTLGLLFEQGDISKAGDEERFLPNRPHYEIQLMNPDGVADLDHHDTYKGFRTSFIHMSFGVYSSEHGSINSLYLAPYALTHFFKWWNLFHTYTSGPIRQGRLFTDVLQNKTKFGRSLFTIAYQLHLKRLMVTHIYRHITTQYDLEKDRKITFTGLKGRFDSLKIDLHQKRVKLTHTNQKLNKSKPVWKFKMSRGEIDCAEADIRILSTLFDQEAVKEILTSGLDGILEDEPSRPITPQDVEYLRESDWYDYEDYIDLNQVPLGSSLPLKLEAIPLLYSPRISYFRKINDDGYVLAYPFGTEESHNCLIGKNHPELTQEKLATERKREIEEQLKLLHITLSELQSNKGGGSVSGNSERYARELKAEVAELNHRLHTVNTILSDLKISETIPGGNTDGDSSSSLSDTDVNLENAPPIQNRISLLRTNTVESFVSMRKASTMQVESTYDNRFMVHNIELKIDNKIRHHLLEYASSAFERKSMRFAVTYKSVTILKELLGNVLTGVRTSVEDYGSILEDDLASNSEFIEHFEKLIREVPSDDFDYVDNYLFRLISPQVQIKSDVERNAAVILAARDIEMGIIDIVQVYGKSGKRIPVDVDTIVETRYSAVSKDIQLFTLFKKDLEGPEGRFFHKNGYGSDKESDIWPPWIPLEMCFDGSLLDKHVFLKRRSMFLTYVAPNPLFFSANDTSAFSYDSRFRIAFPGLVLTSDCQQYCAVYAIAEDLLSFGSSLDEKVEKLSRILFTDEVRNNLENLDVSVVTALQERIKELYYTRAYLKLHEPRLFMKSGQELTFDIQTSTLKLTLLMTAIKKTYDRMGSGNRVIQKRLRWQVGTDELIWELYDESKTPFVTIGLGPSTFIRSETSDGTNSNKVSISSLQCFNQQENPVYTELLAPFYENSSYNKNAPMVEIFWILGPSVGGISDLQDLIVSLQPLIFKMDHKTSEKLMNYLFPKIEQTSIEPNSPELVPRSSTSSFFSSSPVLRHSLSNGSLSVYDAKDVDSWDLRSIQSKEGIKKHKGDHRKLSASLFVQPDYNINEMVKRSGTFFNVKSIIIRKTLMSVCYKGSHSLLTDVNNLIVRVPVLKYHNKLWSREEFFTALKRDVVRIVLQHLGNIIGNKFLPHKKENKKKTSMEIHRLLSPDSQNRDNSHILEVEGHNSFYSSTHSSDIRSINSDETYNENDGNGVKPFYPVTSEFSKNK.

The next 2 helical transmembrane spans lie at 19 to 39 (FMLF…WILM) and 128 to 148 (VLSI…LALT). Asn-191, Asn-210, Asn-311, Asn-452, Asn-468, Asn-605, Asn-638, Asn-663, Asn-698, Asn-789, Asn-835, Asn-981, Asn-1255, Asn-1404, and Asn-1476 each carry an N-linked (GlcNAc...) asparagine glycan. The stretch at 1610 to 1676 (LTQEKLATER…RLHTVNTILS (67 aa)) forms a coiled coil. The disordered stretch occupies residues 1685–1704 (PGGNTDGDSSSSLSDTDVNL). Low complexity predominate over residues 1690–1704 (DGDSSSSLSDTDVNL). N-linked (GlcNAc...) asparagine glycans are attached at residues Asn-1978 and Asn-2189. A phosphoserine mark is found at Ser-2254 and Ser-2278. An N-linked (GlcNAc...) asparagine glycan is attached at Asn-2279. A compositionally biased stretch (polar residues) spans 2451–2471 (SSTHSSDIRSINSDETYNEND). The disordered stretch occupies residues 2451-2489 (SSTHSSDIRSINSDETYNENDGNGVKPFYPVTSEFSKNK).

Its subcellular location is the cell membrane. It is found in the endoplasmic reticulum membrane. The protein resides in the mitochondrion membrane. Tube-forming lipid transport protein which may bind to phosphatidylinositols and may affect phosphatidylinositol-4,5-bisphosphate (PtdIns-4,5-P2) distribution. This chain is Protein YPR117W, found in Saccharomyces cerevisiae (strain ATCC 204508 / S288c) (Baker's yeast).